Reading from the N-terminus, the 132-residue chain is Transmembrane protein 170B (132 aa).

The Extracellular segment spans residues 1–37 (MRAEGADHSMINLSVQQVLSLWAHGTVLRNLTEMWYW). N-linked (GlcNAc...) asparagine glycosylation occurs at asparagine 12. A helical transmembrane segment spans residues 38 to 58 (IFLWALFSSLFVHGAAGVLMF). Over 59–68 (VMLQRHRQGR) the chain is Cytoplasmic. Residues 69–89 (VLSIIAVSIGFLASVTGAMIT) form a helical membrane-spanning segment. The Extracellular segment spans residues 90 to 104 (SAAVAGIYRVAGKNM). A helical membrane pass occupies residues 105–125 (APLEALVWGVGQTVLTLIISF). Topologically, residues 126 to 132 (SRILATL) are cytoplasmic.

This sequence belongs to the TMEM170 family. In terms of assembly, interacts with CTNNB1.

It is found in the cell membrane. The chain is Transmembrane protein 170B (Tmem170b) from Rattus norvegicus (Rat).